The chain runs to 284 residues: Probable O-methyltransferase ustE (284 aa).

Residues N22 and N29 are each glycosylated (N-linked (GlcNAc...) asparagine). Helical transmembrane passes span L88–V108 and Y157–I177. N205 is a glycosylation site (N-linked (GlcNAc...) asparagine). Residues G215 to W235 form a helical membrane-spanning segment. The N-linked (GlcNAc...) asparagine glycan is linked to N264.

This sequence belongs to the class VI-like SAM-binding methyltransferase superfamily. Isoprenylcysteine carboxyl methyltransferase family.

It localises to the membrane. The protein operates within secondary metabolite biosynthesis. Functionally, probable O-methyltransferase; part of the gene cluster that mediates the biosynthesis of ustilaginoidins, dimeric gamma-naphthopyrones isolated from different fungal species. The first step in the biosynthesis of ustilaginoidins is the production of gamma-naphthopyrone precursor YWA1 by the non-reducing polyketide synthase ustP, via condensation of one acetyl-CoA starter unit with 6 malonyl-CoA units. YWA1 is then probably substrate of the ustZ to yield norrubrofusarin via a dehydration reaction. A key enzyme in the biosynthetic pathway is the laccase ustL, which catalyzes the oxidative dimerization of norrubrofusarin to ustilaginoidin A. It can produce the M- and P-atropisomers in varying amounts, depending on the reaction conditions. For the biosynthesis of 3-methylustilaginoid in derivatives such as chaetochromin A, a methylated derivative of YWA1 is required. The C-methylation is considered to be catalyzed by ustM, the phosphopantetheine attachment site of which indicates that it acts on the growing polyketide chain before release of the product. For the biosynthesis of chaetochromin A, it is assumed that saturation of the D2 double bond takes place before dimerization, and is probably catalyzed by an external reductase because no candidate gene was identified within the cluster. This is Probable O-methyltransferase ustE from Ustilaginoidea virens (Rice false smut fungus).